Here is a 162-residue protein sequence, read N- to C-terminus: NADPH-dependent 7-cyano-7-deazaguanine reductase (162 aa).

The Thioimide intermediate role is filled by Cys-53. Residue Asp-60 is the Proton donor of the active site. Substrate is bound by residues 75–77 and 94–95; these read VES and HE.

Belongs to the GTP cyclohydrolase I family. QueF type 1 subfamily.

Its subcellular location is the cytoplasm. The enzyme catalyses 7-aminomethyl-7-carbaguanine + 2 NADP(+) = 7-cyano-7-deazaguanine + 2 NADPH + 3 H(+). It functions in the pathway tRNA modification; tRNA-queuosine biosynthesis. In terms of biological role, catalyzes the NADPH-dependent reduction of 7-cyano-7-deazaguanine (preQ0) to 7-aminomethyl-7-deazaguanine (preQ1). In Exiguobacterium sp. (strain ATCC BAA-1283 / AT1b), this protein is NADPH-dependent 7-cyano-7-deazaguanine reductase.